We begin with the raw amino-acid sequence, 269 residues long: Chromophore lyase CRL, chloroplastic (269 aa).

The helical transmembrane segment at 19-36 (ARGLVVKTLVLIGGALLI) threads the bilayer.

This sequence belongs to the CpcT/CpeT biliprotein lyase family. Mostly expressed in shoot apices, to a lower extent, in leaves, inflorescence stems, buds and cotyledons, and, at low levels, in roots and siliques.

It localises to the plastid. The protein localises to the chloroplast outer membrane. Functionally, covalently attaches a chromophore to Cys residue(s) of phycobiliproteins. Required for plastid division, and involved in cell differentiation and regulation of the cell division plane. Maintenance of plastid homeostasis controls plant preconditioning to stress and stress acclimation. Confers sensitivity to cabbage leaf curl virus (CaLCuV), probably by supporting viral movement. In Arabidopsis thaliana (Mouse-ear cress), this protein is Chromophore lyase CRL, chloroplastic (CRL).